Reading from the N-terminus, the 97-residue chain is YcgL domain-containing protein PSEEN4034 (97 aa).

In terms of domain architecture, YcgL spans 3-87 (RICSIYKSPR…PDDDYIEHLP (85 aa)).

This Pseudomonas entomophila (strain L48) protein is YcgL domain-containing protein PSEEN4034.